Here is a 577-residue protein sequence, read N- to C-terminus: Arginine--tRNA ligase (577 aa).

Positions 122 to 132 match the 'HIGH' region motif; it reads PNVAKEMHVGH.

The protein belongs to the class-I aminoacyl-tRNA synthetase family. As to quaternary structure, monomer.

The protein resides in the cytoplasm. The catalysed reaction is tRNA(Arg) + L-arginine + ATP = L-arginyl-tRNA(Arg) + AMP + diphosphate. The polypeptide is Arginine--tRNA ligase (Salmonella arizonae (strain ATCC BAA-731 / CDC346-86 / RSK2980)).